Here is a 460-residue protein sequence, read N- to C-terminus: Ammonium transporter Rh type B-A (460 aa).

Topologically, residues 1–10 are cytoplasmic; the sequence is MTGYSTNMRI. Residues 11–31 traverse the membrane as a helical segment; that stretch reads KLPLFCLILQFITIILFAVFV. Residues 32–62 lie on the Extracellular side of the membrane; the sequence is RYDHESDARGWHDELKNHSTANADNDFYFRY. N48 is a glycosylation site (N-linked (GlcNAc...) asparagine). The chain crosses the membrane as a helical span at residues 63 to 83; that stretch reads PSFQDVHVMIFIGFGFLMTFL. The Cytoplasmic segment spans residues 84–87; that stretch reads KRYG. The helical transmembrane segment at 88–108 threads the bilayer; the sequence is FSSVAFNFLIAAFGLQWSTLI. Topologically, residues 109–125 are extracellular; that stretch reads QGFFHGFHDGKIHVGIE. The chain crosses the membrane as a helical span at residues 126 to 146; sequence SMINADFCTGAVLISFGAVLG. Over 147 to 150 the chain is Cytoplasmic; sequence KTSP. Residues 151–171 traverse the membrane as a helical segment; that stretch reads VQLIVMTLIEVTLFGINEYII. The Extracellular segment spans residues 172 to 179; the sequence is LNIVGAKD. A helical transmembrane segment spans residues 180–202; it reads AGGSMTIHTFGAYFGLIVSRVLY. Over 203–220 the chain is Cytoplasmic; the sequence is RADLDKSRQREGSVYHSD. The helical transmembrane segment at 221–241 threads the bilayer; it reads LFAMIGTIYLWMFWPSFNSAV. At 242–252 the chain is on the extracellular side; the sequence is TAHGDDQHRTV. The helical transmembrane segment at 253-273 threads the bilayer; sequence LNTYYSLAACTLATFGFSALL. Residues 274-283 lie on the Cytoplasmic side of the membrane; the sequence is NGEGKLDMVH. The chain crosses the membrane as a helical span at residues 284–304; sequence IQNAALAGGVAVGTSGEMMLT. Residue P305 is a topological domain, extracellular. The helical transmembrane segment at 306 to 326 threads the bilayer; that stretch reads FGAMIAGTLAGIVSVLGYKYL. The Cytoplasmic portion of the chain corresponds to 327-347; it reads TPVLDSKLKIQDTCGVHNLHG. A helical membrane pass occupies residues 348-368; it reads MPGILGAVIGAIVALFATADI. Over 369–394 the chain is Extracellular; it reads YGDGMDDVFPMIFDGSRTAKQQSLYQ. The helical transmembrane segment at 395–415 threads the bilayer; it reads FLALLVALGFAIVGGTVVGFI. The Cytoplasmic portion of the chain corresponds to 416–460; it reads LKLPLFGTPSDAECFEDAVYWEVPGGEGHQQLTVVVNNEDPDTQA.

The protein belongs to the ammonium transporter (TC 2.A.49) family. Rh subfamily.

Its subcellular location is the basolateral cell membrane. It localises to the cytoplasmic vesicle membrane. In terms of biological role, functions as a specific ammonium transporter. This chain is Ammonium transporter Rh type B-A (rhbg-a), found in Xenopus laevis (African clawed frog).